The following is a 152-amino-acid chain: Cytosolic calcium-binding protein 1 (152 aa).

Tandem repeats lie at residues 57–62 (VEETEK), 67–71 (TEEAQ), 78–82 (VEIKK), 104–108 (VEAKK), 112–116 (VEEKK), 124–129 (VEEEKK), and 131–136 (EAEEEK). The tract at residues 57–136 (VEETEKPIEE…EKKPEAEEEK (80 aa)) is 7 X 5 AA approximate repeats of V-E-E-K-K. A disordered region spans residues 60–152 (TEKPIEETEE…VTAPVEKADE (93 aa)). Residues 96–138 (DESKTEEVVEAKKEEEVEEKKTEEAPVVVEEEKKPEAEEEKPA) are compositionally biased toward basic and acidic residues.

As to expression, predominantly expressed in petioles (at protein level). Mainly observed in shoots, flowers, siliques and roots, and, to a lower extent, in stems and leaves.

The protein localises to the cytoplasm. It localises to the cytosol. Its function is as follows. Binds calcium Ca(2+) and may act as a signal mediator to buffer Ca(2+). This Arabidopsis thaliana (Mouse-ear cress) protein is Cytosolic calcium-binding protein 1.